Consider the following 82-residue polypeptide: Small ribosomal subunit protein bS16 (82 aa).

It belongs to the bacterial ribosomal protein bS16 family.

In Methylobacillus flagellatus (strain ATCC 51484 / DSM 6875 / VKM B-1610 / KT), this protein is Small ribosomal subunit protein bS16.